Consider the following 349-residue polypeptide: tRNA pseudouridine synthase D (349 aa).

Position 27 (Phe27) interacts with substrate. Residue Asp80 is the Nucleophile of the active site. Asn129 is a substrate binding site. The TRUD domain maps to 155 to 303; sequence GVPNYFGAQR…VEAARRAMLL (149 aa). Phe329 lines the substrate pocket.

Belongs to the pseudouridine synthase TruD family.

It carries out the reaction uridine(13) in tRNA = pseudouridine(13) in tRNA. Functionally, responsible for synthesis of pseudouridine from uracil-13 in transfer RNAs. The polypeptide is tRNA pseudouridine synthase D (Shigella sonnei (strain Ss046)).